The chain runs to 887 residues: Pyruvate, phosphate dikinase 2 (887 aa).

T467 carries the post-translational modification Phosphothreonine; by PDRP1. H469 (tele-phosphohistidine intermediate) is an active-site residue. Residues R575, R632, E761, G782, T783, N784, and D785 each coordinate substrate. E761 contacts Mg(2+). D785 is a Mg(2+) binding site. The active-site Proton donor is the C847.

It belongs to the PEP-utilizing enzyme family. Mg(2+) is required as a cofactor.

Its subcellular location is the cytoplasm. The catalysed reaction is pyruvate + phosphate + ATP = phosphoenolpyruvate + AMP + diphosphate + H(+). Functionally, formation of phosphoenolpyruvate. This is Pyruvate, phosphate dikinase 2 (PPDK2) from Oryza sativa subsp. japonica (Rice).